A 591-amino-acid polypeptide reads, in one-letter code: Lysyl oxidase homolog 1 (591 aa).

The N-terminal stretch at 1 to 22 (MALALTGWQLVWGACVCVLVHG) is a signal peptide. Residues 23–91 (QQAPPGQGSD…PRRRGGLRRR (69 aa)) constitute a propeptide that is removed on maturation. 2 disordered regions span residues 77-107 (APQAPPRRRGGLRRRQAPSLPLPGRVGSDTV) and 233-373 (EYGG…RLSV). A compositionally biased stretch (basic residues) spans 82 to 92 (PRRRGGLRRRQ). Over residues 298–313 (NGGGGGGTYGGGGGDP) the composition is skewed to gly residues. An interaction with FBLN5 region spans residues 319–386 (PPYGNMPPEA…YRPNQNGRGL (68 aa)). The tract at residues 387–591 (PDLVPDPNYV…STTNCKIVQS (205 aa)) is lysyl-oxidase like. Cystine bridges form between cysteine 412–cysteine 418, cysteine 465–cysteine 514, cysteine 498–cysteine 504, cysteine 525–cysteine 535, and cysteine 572–cysteine 586. Histidine 466, histidine 468, and histidine 470 together coordinate Cu cation. A cross-link (lysine tyrosylquinone (Lys-Tyr)) is located at residues 494-529 (KASFCLEDSTCDFGNLKRYACTSHTQGLSPGCYDTY). Tyrosine 529 is subject to 2',4',5'-topaquinone.

This sequence belongs to the lysyl oxidase family. In terms of assembly, interacts (via propeptide) with EFEMP2. Interacts with FBLN5. Cu cation is required as a cofactor. The cofactor is lysine tyrosylquinone residue. In terms of processing, the lysine tyrosylquinone cross-link (LTQ) is generated by condensation of the epsilon-amino group of a lysine with a topaquinone produced by oxidation of tyrosine. Post-translationally, proteolytic processing by a furin-like protease causes removal of N-terminal propeptide resulting in an enzyme largely inactive, but further proteolytic processing by BMP1 results in enzyme activation.

The protein resides in the secreted. The protein localises to the extracellular space. It is found in the extracellular matrix. It carries out the reaction L-lysyl-[protein] + O2 + H2O = (S)-2-amino-6-oxohexanoyl-[protein] + H2O2 + NH4(+). In terms of biological role, catalyzes the oxidative deamination of lysine and hydroxylysine residues in collagen and elastin, resulting in the formation of covalent cross-linkages, and the stabilization of collagen and elastin fibers. Essential for the elastic fiber homeostasis and for their maintenance at adult age. In Bos taurus (Bovine), this protein is Lysyl oxidase homolog 1 (LOXL1).